The sequence spans 364 residues: D-alanine--D-alanine ligase A (364 aa).

One can recognise an ATP-grasp domain in the interval lysine 145–glutamate 348. Glutamate 175–glutamate 230 lines the ATP pocket. Positions 302, 315, and 317 each coordinate Mg(2+).

This sequence belongs to the D-alanine--D-alanine ligase family. Requires Mg(2+) as cofactor. The cofactor is Mn(2+).

Its subcellular location is the cytoplasm. The catalysed reaction is 2 D-alanine + ATP = D-alanyl-D-alanine + ADP + phosphate + H(+). It functions in the pathway cell wall biogenesis; peptidoglycan biosynthesis. Its function is as follows. Cell wall formation. The protein is D-alanine--D-alanine ligase A of Escherichia coli O6:H1 (strain CFT073 / ATCC 700928 / UPEC).